The sequence spans 799 residues: ATP-dependent RNA helicase DBP7 (799 aa).

Disordered stretches follow at residues 34 to 177 and 201 to 229; these read KALR…RRIR and DRIA…NAAL. Composition is skewed to basic and acidic residues over residues 35 to 49, 56 to 66, 73 to 100, 114 to 132, and 139 to 172; these read ALRE…KKEQ, IEDRMKRREQD, KPYD…KSYD, EKYQ…ERWV, and NRRD…DGSL. The span at 208–220 shows a compositional bias: acidic residues; the sequence is VQMEDEEEEEAEN. Positions 233–261 match the Q motif motif; that stretch reads TTFSGLGCSQRLVDALVGMQLAKPTKIQR. Residues 265-465 enclose the Helicase ATP-binding domain; the sequence is PRLIQRERDL…KSTLKDADWV (201 aa). ATP contacts are provided by residues 278-285 and 306-313; these read AQTGSGKT and TGLFAVIL. A DEAD box motif is present at residues 391–394; sequence DEGD. Positions 511-679 constitute a Helicase C-terminal domain; the sequence is DILQSSEKTN…NILAAGFGGK (169 aa). A disordered region spans residues 750–799; that stretch reads KLGKKKDPEKIKVNKDGSLDETQARKKMLDRSRKHVYNSGESAMGGYVLE. Positions 754–780 are enriched in basic and acidic residues; that stretch reads KKDPEKIKVNKDGSLDETQARKKMLDR.

Belongs to the DEAD box helicase family. DDX31/DBP7 subfamily.

It is found in the nucleus. Its subcellular location is the nucleolus. It catalyses the reaction ATP + H2O = ADP + phosphate + H(+). In terms of biological role, ATP-binding RNA helicase involved in the biogenesis of 60S ribosomal subunits and is required for the normal formation of 25S and 5.8S rRNAs. This Yarrowia lipolytica (strain CLIB 122 / E 150) (Yeast) protein is ATP-dependent RNA helicase DBP7 (DBP7).